Consider the following 37-residue polypeptide: Cytochrome b6-f complex subunit 5 (37 aa).

Residues 5 to 25 (FLLGIILGLIPITLIGLFVTA) form a helical membrane-spanning segment.

The protein belongs to the PetG family. In terms of assembly, the 4 large subunits of the cytochrome b6-f complex are cytochrome b6, subunit IV (17 kDa polypeptide, PetD), cytochrome f and the Rieske protein, while the 4 small subunits are PetG, PetL, PetM and PetN. The complex functions as a dimer.

Its subcellular location is the plastid membrane. Component of the cytochrome b6-f complex, which mediates electron transfer between photosystem II (PSII) and photosystem I (PSI), cyclic electron flow around PSI, and state transitions. PetG is required for either the stability or assembly of the cytochrome b6-f complex. The polypeptide is Cytochrome b6-f complex subunit 5 (Cuscuta obtusiflora (Peruvian dodder)).